Consider the following 345-residue polypeptide: Mariner Mos1 transposase (345 aa).

Residues 1 to 112 (MSSFVPNKEQ…VSNRLREMGK (112 aa)) form a DNA-binding region. 2 consecutive DNA-binding regions (H-T-H motif) follow at residues 24–55 (TAAE…RFKS) and 89–110 (QKQL…LREM). The interval 113–125 (IQKVGRWVPHELN) is linker. Positions 126-345 (ERQMERRKNT…CVASDGKYLE (220 aa)) are catalytic. Residues Asp156, Asp249, and Asp284 each coordinate Mg(2+).

Homodimer. The complex has a trans arrangement, with each transposon end recognized by the DNA binding region of one transposase monomer and by the active site of the other monomer. Mg(2+) is required as a cofactor. Mn(2+) serves as cofactor.

It localises to the nucleus. Functionally, mediates transposition of transposon Mos1 by a 'cut and paste' mechanism. Transposases are sequence-specific nucleases and strand transferases that catalyze transposition through an ordered series of events: sequence-specific binding of transposase to the terminal inverted repeats (IR) present at each end of the transposon, pairing of the transposon IRs in a paired-end complex (PEC), cleavage of one or both DNA strands at each transposon end, capture of target DNA, and strand transfer to insert the transposon at a new site. The chain is Mariner Mos1 transposase (mariner\T) from Drosophila mauritiana (Fruit fly).